Reading from the N-terminus, the 82-residue chain is MPKADIHPTWYPEAKIICNGEVVMTVGSTQPEIHVEVWSGNHPFYTGTQKMIDTEGRIDRFQKRYGNLGKGGSKPNKKGDQK.

It belongs to the bacterial ribosomal protein bL31 family. Type A subfamily. In terms of assembly, part of the 50S ribosomal subunit.

Its function is as follows. Binds the 23S rRNA. The sequence is that of Large ribosomal subunit protein bL31 from Rippkaea orientalis (strain PCC 8801 / RF-1) (Cyanothece sp. (strain PCC 8801)).